A 270-amino-acid polypeptide reads, in one-letter code: Putative phosphoenolpyruvate synthase regulatory protein (270 aa).

150–157 (GVSRCGKT) is an ADP binding site.

The protein belongs to the pyruvate, phosphate/water dikinase regulatory protein family. PSRP subfamily.

The catalysed reaction is [pyruvate, water dikinase] + ADP = [pyruvate, water dikinase]-phosphate + AMP + H(+). It carries out the reaction [pyruvate, water dikinase]-phosphate + phosphate + H(+) = [pyruvate, water dikinase] + diphosphate. In terms of biological role, bifunctional serine/threonine kinase and phosphorylase involved in the regulation of the phosphoenolpyruvate synthase (PEPS) by catalyzing its phosphorylation/dephosphorylation. This chain is Putative phosphoenolpyruvate synthase regulatory protein, found in Shewanella loihica (strain ATCC BAA-1088 / PV-4).